Here is a 225-residue protein sequence, read N- to C-terminus: Protein-L-isoaspartate O-methyltransferase (225 aa).

The active site involves S75.

It belongs to the methyltransferase superfamily. L-isoaspartyl/D-aspartyl protein methyltransferase family.

The protein resides in the cytoplasm. The enzyme catalyses [protein]-L-isoaspartate + S-adenosyl-L-methionine = [protein]-L-isoaspartate alpha-methyl ester + S-adenosyl-L-homocysteine. Its function is as follows. Catalyzes the methyl esterification of L-isoaspartyl residues in peptides and proteins that result from spontaneous decomposition of normal L-aspartyl and L-asparaginyl residues. It plays a role in the repair and/or degradation of damaged proteins. This chain is Protein-L-isoaspartate O-methyltransferase, found in Xanthomonas euvesicatoria pv. vesicatoria (strain 85-10) (Xanthomonas campestris pv. vesicatoria).